The primary structure comprises 1077 residues: Hemoglobin and hemoglobin-haptoglobin-binding protein A (1077 aa).

An N-terminal signal peptide occupies residues 1 to 24 (MTNFRLNVLAYSVMLGLTASVAYA). The disordered stretch occupies residues 25-72 (EPTNQPTNQPTNQPTNQPTNQPTNQPTNQPTNQPTNQPTNQPTNQNSN). A run of 11 repeats spans residues 26–29 (PTNQ), 30–33 (PTNQ), 34–37 (PTNQ), 38–41 (PTNQ), 42–45 (PTNQ), 46–49 (PTNQ), 50–53 (PTNQ), 54–57 (PTNQ), 58–61 (PTNQ), 62–65 (PTNQ), and 66–69 (PTNQ). Residues 26–69 (PTNQPTNQPTNQPTNQPTNQPTNQPTNQPTNQPTNQPTNQPTNQ) form an 11 X 4 AA tandem repeats of P-T-N-Q region. The span at 26 to 70 (PTNQPTNQPTNQPTNQPTNQPTNQPTNQPTNQPTNQPTNQPTNQN) shows a compositional bias: low complexity. The TonB box signature appears at 78-85 (EQINVSGS). The TBDR plug domain maps to 89–216 (TDTKAPPKIA…LGGSVSLDTK (128 aa)). The TBDR beta-barrel domain occupies 224–1077 (NKNYYASYKR…NYRMSVQFEF (854 aa)). The short motif at 1060-1077 (NRFYAPERNYRMSVQFEF) is the TonB C-terminal box element.

Belongs to the TonB-dependent receptor family. Hemoglobin/haptoglobin binding protein subfamily.

It is found in the cell outer membrane. Its function is as follows. Acts as a receptor for hemoglobin or the hemoglobin/haptoglobin complex of the human host and is required for heme uptake. The chain is Hemoglobin and hemoglobin-haptoglobin-binding protein A (hgpA) from Haemophilus influenzae.